The primary structure comprises 369 residues: Serpentine receptor class epsilon-45 (369 aa).

The next 8 helical transmembrane spans lie at 1-21 (MIFL…IFIL), 39-59 (FVLT…AIHI), 67-87 (TVLL…NILI), 127-147 (FFLG…TLLV), 169-191 (GLFF…LFFF), 195-217 (HFAV…FTYV), 258-278 (VIHA…FMYL), and 291-311 (IFES…LGSV).

The protein belongs to the nematode receptor-like protein sre family.

The protein resides in the membrane. The chain is Serpentine receptor class epsilon-45 (sre-45) from Caenorhabditis elegans.